The following is a 965-amino-acid chain: Meiosis-specific coiled-coil domain-containing protein MEIOC (965 aa).

2 disordered regions span residues 1 to 22 (MEVSGGDTCRPRHPQGLREGPE) and 946 to 965 (VHESINSSNPMNQRGETSKH). Residues 949–965 (SINSSNPMNQRGETSKH) are compositionally biased toward polar residues.

In terms of assembly, interacts with YTHDC2; binds transcripts that regulate the mitotic cell cycle inhibiting progression into metaphase, thereby allowing meiotic prophase to proceed normally. Interacts with RBM46. As to expression, expressed specifically in fetal ovary and postnatal and adult testes (at protein level). In adult testis expressed in spermatocytes, beginning in preleptotene and extending through most stages of meiotic prophase I, including leptotene, zygotene, and pachytene.

The protein resides in the cytoplasm. Its subcellular location is the nucleus. Functionally, is required for meiosis completion in both male and female germ cells. Confers stability to numerous meiotic mRNAs in gonads allowing proper initiation and progression into meiosis prophase I. The function may involve YTHDC2 and is independent of induction by retinoic acid (RA). Maintains an extended meiotic prophase I by properly promoting the transition from a mitotic to a meiotic cell cycle program by binding transcripts through its interaction with YTHDC2 that regulate the mitotic cell cycle. The polypeptide is Meiosis-specific coiled-coil domain-containing protein MEIOC (Mus musculus (Mouse)).